The chain runs to 375 residues: MKPRFAFSISATDGAARAGVIAMQRGEIRTPAFMPVGTAATVKAMRPAEVRAAGADIILGNTYHLMLRPTAERMARFGGLHKFMGWDRPILTDSGGYQVMSLSALTKQSEEGVAFKSHLDGSRHMLTPERSMEIQRLLGSDIVMAFDECPPAGVDARRAEASMERSMRWAARSRAGFDAGEEHAARSALFGIQQGSLDEKLRARSAATLIDIGFDGYAIGGLAVGEGQAAMFGVLDFAPAQLPADRPRYLMGVGKPDDLVGAVARGVDMFDCVLPTRSGRNGQAFTWDGPLNIRNAKFADDQEPLDASCGCPVCTIWSRGYLHHLVRAGEMLGAMLMTQHNIHFYQDLMQAMRDAITTGRFAAFRSDFAARYRRA.

D93 functions as the Proton acceptor in the catalytic mechanism. Residues 93–97, D147, Q194, and G221 contribute to the substrate site; that span reads DSGGY. The interval 252 to 258 is RNA binding; sequence GVGKPDD. D271 acts as the Nucleophile in catalysis. Residues 276-280 form an RNA binding; important for wobble base 34 recognition region; that stretch reads TRSGR. The Zn(2+) site is built by C309, C311, C314, and H340.

It belongs to the queuine tRNA-ribosyltransferase family. As to quaternary structure, homodimer. Within each dimer, one monomer is responsible for RNA recognition and catalysis, while the other monomer binds to the replacement base PreQ1. Zn(2+) serves as cofactor.

It catalyses the reaction 7-aminomethyl-7-carbaguanine + guanosine(34) in tRNA = 7-aminomethyl-7-carbaguanosine(34) in tRNA + guanine. It functions in the pathway tRNA modification; tRNA-queuosine biosynthesis. Its function is as follows. Catalyzes the base-exchange of a guanine (G) residue with the queuine precursor 7-aminomethyl-7-deazaguanine (PreQ1) at position 34 (anticodon wobble position) in tRNAs with GU(N) anticodons (tRNA-Asp, -Asn, -His and -Tyr). Catalysis occurs through a double-displacement mechanism. The nucleophile active site attacks the C1' of nucleotide 34 to detach the guanine base from the RNA, forming a covalent enzyme-RNA intermediate. The proton acceptor active site deprotonates the incoming PreQ1, allowing a nucleophilic attack on the C1' of the ribose to form the product. After dissociation, two additional enzymatic reactions on the tRNA convert PreQ1 to queuine (Q), resulting in the hypermodified nucleoside queuosine (7-(((4,5-cis-dihydroxy-2-cyclopenten-1-yl)amino)methyl)-7-deazaguanosine). This is Queuine tRNA-ribosyltransferase from Sphingopyxis alaskensis (strain DSM 13593 / LMG 18877 / RB2256) (Sphingomonas alaskensis).